The sequence spans 255 residues: uncharacterized protein (255 aa).

The signal sequence occupies residues 1–23 (MKRLNKLVLGINLLFLVISITAG). Residue Cys-24 is the site of N-palmitoyl cysteine attachment. The S-diacylglycerol cysteine moiety is linked to residue Cys-24.

This sequence belongs to the staphylococcal tandem lipoprotein family.

The protein localises to the cell membrane. This is an uncharacterized protein from Staphylococcus aureus (strain MRSA252).